We begin with the raw amino-acid sequence, 194 residues long: Protein ORF31 (194 aa).

A signal peptide spans 1–25 (MKSVASPLCQFHGVFCLYQCRQCLA).

Belongs to the herpesviridae UL92 family. In terms of assembly, interacts with ORF34.

The protein localises to the host nucleus. It is found in the host cytoplasm. Plays an important role in the expression of late genes. May play a role in viral replication. The polypeptide is Protein ORF31 (ORF31) (Homo sapiens (Human)).